Reading from the N-terminus, the 421-residue chain is Homoserine dehydrogenase (421 aa).

The NAD(+) site is built by valine 15, alanine 34, and valine 44. Valine 15 provides a ligand contact to NADP(+). Residue valine 15 participates in NADPH binding. The NADP(+) site is built by arginine 46 and lysine 103. NADPH is bound by residues arginine 46 and lysine 103. Glutamate 125, valine 128, glycine 130, and isoleucine 132 together coordinate Na(+). Positions 183 and 186 each coordinate NADP(+). The L-homoserine site is built by glutamate 186 and aspartate 197. Lysine 201 acts as the Proton donor in catalysis. An NAD(+)-binding site is contributed by glycine 298. An NADP(+)-binding site is contributed by glycine 298. An NADPH-binding site is contributed by glycine 298. The ACT domain occupies 343-418; it reads YARLLVSDEK…SVLDTPKMIR (76 aa).

This sequence belongs to the homoserine dehydrogenase family. A metal cation serves as cofactor.

The enzyme catalyses L-homoserine + NADP(+) = L-aspartate 4-semialdehyde + NADPH + H(+). It carries out the reaction L-homoserine + NAD(+) = L-aspartate 4-semialdehyde + NADH + H(+). Its pathway is amino-acid biosynthesis; L-methionine biosynthesis via de novo pathway; L-homoserine from L-aspartate: step 3/3. The protein operates within amino-acid biosynthesis; L-threonine biosynthesis; L-threonine from L-aspartate: step 3/5. Catalyzes the conversion of L-aspartate-beta-semialdehyde (L-Asa) to L-homoserine (L-Hse), the third step in the biosynthesis of threonine and methionine from aspartate. This chain is Homoserine dehydrogenase (hom), found in Helicobacter pylori (strain ATCC 700392 / 26695) (Campylobacter pylori).